A 606-amino-acid chain; its full sequence is Elongation factor 4 (606 aa).

The region spanning 11–193 (DKIRNFSIVA…AIVTRLPPPK (183 aa)) is the tr-type G domain. GTP-binding positions include 23 to 28 (DHGKST) and 140 to 143 (NKVD).

The protein belongs to the TRAFAC class translation factor GTPase superfamily. Classic translation factor GTPase family. LepA subfamily.

Its subcellular location is the cell inner membrane. It catalyses the reaction GTP + H2O = GDP + phosphate + H(+). Its function is as follows. Required for accurate and efficient protein synthesis under certain stress conditions. May act as a fidelity factor of the translation reaction, by catalyzing a one-codon backward translocation of tRNAs on improperly translocated ribosomes. Back-translocation proceeds from a post-translocation (POST) complex to a pre-translocation (PRE) complex, thus giving elongation factor G a second chance to translocate the tRNAs correctly. Binds to ribosomes in a GTP-dependent manner. The chain is Elongation factor 4 from Caulobacter vibrioides (strain ATCC 19089 / CIP 103742 / CB 15) (Caulobacter crescentus).